The chain runs to 340 residues: Glyceraldehyde-3-phosphate dehydrogenase (340 aa).

NAD(+) is bound by residues Ser-11 to Ile-12 and Gly-111. Position 140 to 142 (Ser-140 to Asn-142) interacts with D-glyceraldehyde 3-phosphate. Cys-141 functions as the Nucleophile in the catalytic mechanism. Arg-169 is a binding site for NAD(+). Residue His-195–Gly-196 coordinates D-glyceraldehyde 3-phosphate. Gln-303 serves as a coordination point for NAD(+).

Belongs to the glyceraldehyde-3-phosphate dehydrogenase family. In terms of assembly, homotetramer.

It is found in the cytoplasm. The enzyme catalyses D-glyceraldehyde 3-phosphate + phosphate + NADP(+) = (2R)-3-phospho-glyceroyl phosphate + NADPH + H(+). It catalyses the reaction D-glyceraldehyde 3-phosphate + phosphate + NAD(+) = (2R)-3-phospho-glyceroyl phosphate + NADH + H(+). The protein operates within carbohydrate degradation; glycolysis; pyruvate from D-glyceraldehyde 3-phosphate: step 1/5. The chain is Glyceraldehyde-3-phosphate dehydrogenase from Methanococcus maripaludis (strain C7 / ATCC BAA-1331).